The primary structure comprises 263 residues: Nicotinamide riboside transporter PnuC (263 aa).

Residues 1–40 (MQYGMDSFGLRGIPHQVFIKKKEGKIMSLAWWKRELFGGW) lie on the Cytoplasmic side of the membrane. A helical membrane pass occupies residues 41 to 61 (THFEAVWLLMFLGIQAVVFVF). Residue Asn-62 is a topological domain, periplasmic. A helical transmembrane segment spans residues 63–83 (PDSWLASVAAVTGILCVVFVG). The Cytoplasmic portion of the chain corresponds to 84–86 (KGK). Residues 87–107 (ISNYLFGLISVSLYAYVSYTF) form a helical membrane-spanning segment. Residues 108–109 (KL) lie on the Periplasmic side of the membrane. Residues 110 to 131 (YGEMMLNLLVYVPVQFVGFAMW) form a helical membrane-spanning segment. Gln-124 is a binding site for beta-nicotinamide D-riboside. Residues 132-155 (RKHMALGETAETEEVKAKALTVRQ) are Cytoplasmic-facing. Residues 156-177 (WLLVVAASVVGTSVYIEWLHHL) form a helical membrane-spanning segment. Topologically, residues 178–180 (GSA) are periplasmic. Residues 181–201 (LPTLDGVTVVVSIVAQVLMIL) traverse the membrane as a helical segment. Position 196 (Gln-196) interacts with beta-nicotinamide D-riboside. The Cytoplasmic portion of the chain corresponds to 202-205 (RYRE). A helical membrane pass occupies residues 206–226 (QWALWIVVNILTISLWAVAWF). Residues Trp-210 and Asn-214 each coordinate beta-nicotinamide D-riboside. The Periplasmic portion of the chain corresponds to 227-232 (KNGETS). Residues 233-253 (LPLLLMYVMYLCNSVYGYINW) form a helical membrane-spanning segment. Beta-nicotinamide D-riboside is bound at residue Tyr-242. At 254–263 (TKLVKRHSGQ) the chain is on the cytoplasmic side.

This sequence belongs to the nicotinamide ribonucleoside (NR) uptake permease (TC 4.B.1) family. In terms of assembly, homotrimer.

The protein localises to the cell inner membrane. Required for nicotinamide riboside transport across the inner membrane. This chain is Nicotinamide riboside transporter PnuC, found in Neisseria mucosa (strain ATCC 25996 / DSM 4631 / NCTC 10774 / M26).